The chain runs to 365 residues: Chorismate synthase (365 aa).

R46 lines the NADP(+) pocket. Residues 123-125, 241-242, G281, 296-300, and R322 each bind FMN; these read RSS, NG, and KPTPS.

It belongs to the chorismate synthase family. As to quaternary structure, homotetramer. Requires FMNH2 as cofactor.

The catalysed reaction is 5-O-(1-carboxyvinyl)-3-phosphoshikimate = chorismate + phosphate. It participates in metabolic intermediate biosynthesis; chorismate biosynthesis; chorismate from D-erythrose 4-phosphate and phosphoenolpyruvate: step 7/7. Its function is as follows. Catalyzes the anti-1,4-elimination of the C-3 phosphate and the C-6 proR hydrogen from 5-enolpyruvylshikimate-3-phosphate (EPSP) to yield chorismate, which is the branch point compound that serves as the starting substrate for the three terminal pathways of aromatic amino acid biosynthesis. This reaction introduces a second double bond into the aromatic ring system. The protein is Chorismate synthase of Helicobacter pylori (strain G27).